The primary structure comprises 661 residues: Transmembrane and coiled-coil domain-containing protein STS1 (661 aa).

Disordered stretches follow at residues 34-71 (AHHHHDDDDEEQGRTSTSSGGGGGSSSSSSNSGAGADA) and 154-185 (VGNTIKGGDQDALPSSSGTDKSPGESSHDDQL). A compositionally biased stretch (low complexity) spans 59–69 (SSSSSNSGAGA). Residues 175-184 (SPGESSHDDQ) show a composition bias toward basic and acidic residues. The next 4 membrane-spanning stretches (helical) occupy residues 306–326 (ALLAITGGLAAPAIAAGFGAL), 333–353 (LVPVIGASGFAAMATAAGSVA), 355–375 (SVAVAASFGAAGAGLTGSKMA), and 466–486 (LSGLLAAFAWPATLLAATDFI).

The protein belongs to the TMCO4 family. As to quaternary structure, interacts with PKS10/PKS2 and 4CLL9/ACOS12.

The protein resides in the endoplasmic reticulum membrane. Involved in anther lipids biosynthesis and is required for tapetum degradation and pollen wall formation. Required for the formation of Ubisch bodies and microspores. Possesses lipase activity in vitro toward two synthetic substrates, p-nitrophenyl acetate (pNPA) and p-nitrophenyl butyrate (pNPB). The protein is Transmembrane and coiled-coil domain-containing protein STS1 of Oryza sativa subsp. japonica (Rice).